The chain runs to 301 residues: UDP-N-acetylenolpyruvoylglucosamine reductase (301 aa).

The FAD-binding PCMH-type domain maps to 30–194; the sequence is VGGEADYLVF…LSVKFALAPG (165 aa). The active site involves Arg173. Ser223 functions as the Proton donor in the catalytic mechanism. Glu293 is an active-site residue.

This sequence belongs to the MurB family. Requires FAD as cofactor.

The protein localises to the cytoplasm. The catalysed reaction is UDP-N-acetyl-alpha-D-muramate + NADP(+) = UDP-N-acetyl-3-O-(1-carboxyvinyl)-alpha-D-glucosamine + NADPH + H(+). It participates in cell wall biogenesis; peptidoglycan biosynthesis. In terms of biological role, cell wall formation. In Streptococcus pneumoniae (strain Hungary19A-6), this protein is UDP-N-acetylenolpyruvoylglucosamine reductase.